The sequence spans 563 residues: Lengsin (563 aa).

The segment at 1 to 115 (MTDEGDLAQE…PNTDPTRYNA (115 aa)) is disordered. The segment covering 26-37 (SKLRRARRKVTK) has biased composition (basic residues). 2 stretches are compositionally biased toward polar residues: residues 51–62 (ANSSEMSRNQIA) and 105–115 (SPNTDPTRYNA). The 95-residue stretch at 137 to 231 (NHLQFVRFEA…VICDTFTVTG (95 aa)) folds into the GS beta-grasp domain. In terms of domain architecture, GS catalytic spans 238–563 (PRYIAKRQLR…EGNKFLEYFI (326 aa)).

This sequence belongs to the glutamine synthetase family. As to quaternary structure, dodecamer. Interacts with BFSP2 and VIM. Expressed in lens.

Functionally, may act as a component of the cytoskeleton or as a chaperone for the reorganization of intermediate filament proteins during terminal differentiation in the lens. Does not seem to have enzymatic activity. The chain is Lengsin (Lgsn) from Mus musculus (Mouse).